The following is a 453-amino-acid chain: Probable glycine dehydrogenase (decarboxylating) subunit 1 (453 aa).

Belongs to the GcvP family. N-terminal subunit subfamily. In terms of assembly, the glycine cleavage system is composed of four proteins: P, T, L and H. In this organism, the P 'protein' is a heterodimer of two subunits.

The catalysed reaction is N(6)-[(R)-lipoyl]-L-lysyl-[glycine-cleavage complex H protein] + glycine + H(+) = N(6)-[(R)-S(8)-aminomethyldihydrolipoyl]-L-lysyl-[glycine-cleavage complex H protein] + CO2. Its function is as follows. The glycine cleavage system catalyzes the degradation of glycine. The P protein binds the alpha-amino group of glycine through its pyridoxal phosphate cofactor; CO(2) is released and the remaining methylamine moiety is then transferred to the lipoamide cofactor of the H protein. This Dictyoglomus thermophilum (strain ATCC 35947 / DSM 3960 / H-6-12) protein is Probable glycine dehydrogenase (decarboxylating) subunit 1.